A 268-amino-acid chain; its full sequence is Tryptophan synthase alpha chain (268 aa).

Active-site proton acceptor residues include E49 and D60.

The protein belongs to the TrpA family. Tetramer of two alpha and two beta chains.

It carries out the reaction (1S,2R)-1-C-(indol-3-yl)glycerol 3-phosphate + L-serine = D-glyceraldehyde 3-phosphate + L-tryptophan + H2O. Its pathway is amino-acid biosynthesis; L-tryptophan biosynthesis; L-tryptophan from chorismate: step 5/5. Its function is as follows. The alpha subunit is responsible for the aldol cleavage of indoleglycerol phosphate to indole and glyceraldehyde 3-phosphate. The protein is Tryptophan synthase alpha chain of Dechloromonas aromatica (strain RCB).